Reading from the N-terminus, the 1097-residue chain is uncharacterized protein (1097 aa).

The stretch at 31–1087 (LLNVARQEEE…TALNKLRTRH (1057 aa)) forms a coiled coil.

This sequence belongs to the TRAFAC class myosin-kinesin ATPase superfamily. Myosin family. As to expression, specifically expressed in muscles of the head including temporalis and tensor veli palatini.

Functionally, has most probably lost the function in masticatory muscles contraction suspected for its homologs in dog (AC F1PT61) and apes. This is an uncharacterized protein from Homo sapiens (Human).